Consider the following 114-residue polypeptide: MAEISSAKAMARTVRVSPRKTRLVLDLIRGKKVADAIAILKFTPNKAARVIEKTLNSAIANAENNFGLEKANLVVSETFANEGPTMKRFRPRAKGSASPINKRTTHVTVVVSEK.

It belongs to the universal ribosomal protein uL22 family. Part of the 50S ribosomal subunit.

This protein binds specifically to 23S rRNA; its binding is stimulated by other ribosomal proteins, e.g. L4, L17, and L20. It is important during the early stages of 50S assembly. It makes multiple contacts with different domains of the 23S rRNA in the assembled 50S subunit and ribosome. Its function is as follows. The globular domain of the protein is located near the polypeptide exit tunnel on the outside of the subunit, while an extended beta-hairpin is found that lines the wall of the exit tunnel in the center of the 70S ribosome. The polypeptide is Large ribosomal subunit protein uL22 (Streptococcus pyogenes serotype M6 (strain ATCC BAA-946 / MGAS10394)).